The chain runs to 369 residues: Core histone macro-H2A.1 (369 aa).

In terms of domain architecture, Histone H2A spans 2 to 117 (SSRGGKKKST…NIHPELLAKK (116 aa)). An N6-lactoyllysine; alternate mark is found at lysine 7 and lysine 9. At lysine 18 the chain carries N6-methyllysine. Residue lysine 116 is modified to N6-acetyllysine; alternate. Lysine 116 is covalently cross-linked (Glycyl lysine isopeptide (Lys-Gly) (interchain with G-Cter in ubiquitin); alternate). A Glycyl lysine isopeptide (Lys-Gly) (interchain with G-Cter in ubiquitin) cross-link involves residue lysine 117. At lysine 123 the chain carries N6-acetyllysine; alternate. Lysine 123 carries the post-translational modification N6,N6-dimethyllysine; alternate. Residue lysine 123 forms a Glycyl lysine isopeptide (Lys-Gly) (interchain with G-Cter in SUMO2); alternate linkage. Residues 128-180 (ITPPPAKKAKSPSQKKPVAKKTGGKKGARKSKKKQGEVSKAASADSTTEGTPT) form a disordered region. Position 129 is a phosphothreonine (threonine 129). The segment covering 144–160 (PVAKKTGGKKGARKSKK) has biased composition (basic residues). A Glycyl lysine isopeptide (Lys-Gly) (interchain with G-Cter in SUMO2) cross-link involves residue lysine 167. A phosphoserine mark is found at serine 170 and serine 173. Phosphothreonine is present on threonine 178. Residues 184 to 367 (TVLSTKSLFL…IYVQEMAKLD (184 aa)) form the Macro domain. A Glycyl lysine isopeptide (Lys-Gly) (interchain with G-Cter in SUMO2) cross-link involves residue lysine 189. Positions 203, 204, 226, 275, 312, 313, 314, and 316 each coordinate a glycoprotein. Residue lysine 320 forms a Glycyl lysine isopeptide (Lys-Gly) (interchain with G-Cter in SUMO2) linkage.

This sequence belongs to the histone H2A family. In terms of assembly, the nucleosome is a histone octamer containing two molecules each of H2A, H2B, H3 and H4 assembled in one H3-H4 heterotetramer and two H2A-H2B heterodimers. Interacts with HDAC1 and HDAC2. Interacts with SPOP. Part of a complex consisting of MACROH2A1, CUL3 and SPOP. Interacts with PARP1. In terms of processing, monoubiquitinated at either Lys-116 or Lys-117. May also be polyubiquitinated. Ubiquitination is mediated by the CUL3/SPOP E3 complex and does not promote proteasomal degradation. Instead, it is required for enrichment in inactive X chromosome chromatin. As to expression, widely expressed, with high levels in testis. Present in liver, kidney and adrenal gland (at protein level). In the liver, present in hepatocytes and at a lesser extent in cells of the bile ducts. In the kidney, expressed in proximal and distal convoluted tubules and in straight proximal tubules. In the adrenal gland, present in inner cells of the cortex and medulla.

The protein resides in the nucleus. Its subcellular location is the chromosome. Its function is as follows. Variant histone H2A which replaces conventional H2A in a subset of nucleosomes where it represses transcription. Nucleosomes wrap and compact DNA into chromatin, limiting DNA accessibility to the cellular machineries which require DNA as a template. Histones thereby play a central role in transcription regulation, DNA repair, DNA replication and chromosomal stability. DNA accessibility is regulated via a complex set of post-translational modifications of histones, also called histone code, and nucleosome remodeling. Involved in stable X chromosome inactivation. Inhibits the binding of transcription factors, including NF-kappa-B, and interferes with the activity of remodeling SWI/SNF complexes. Inhibits histone acetylation by EP300 and recruits class I HDACs, which induces a hypoacetylated state of chromatin. In terms of biological role, isoform that specifically binds poly-ADP-ribose and O-acetyl-ADP-ribose and plays a key role in NAD(+) metabolism. Able to bind to the ends of poly-ADP-ribose chains created by PARP1 and cap them. This prevents PARP1 from further addition of ADP-ribose and thus limits the consumption of nuclear NAD(+), allowing the cell to maintain proper NAD(+) levels in both the nucleus and the mitochondria to promote proper mitochondrial respiration. Increases the expression of genes involved in redox metabolism, including SOD3. Functionally, in contrast to isoform 1, does not bind poly-ADP-ribose. Represses SOD3 gene expression. This chain is Core histone macro-H2A.1, found in Mus musculus (Mouse).